Reading from the N-terminus, the 402-residue chain is UDP-N-acetylmuramoylalanine--D-glutamate ligase (402 aa).

97 to 103 (GTNGKTT) is an ATP binding site.

The protein belongs to the MurCDEF family.

The protein localises to the cytoplasm. It catalyses the reaction UDP-N-acetyl-alpha-D-muramoyl-L-alanine + D-glutamate + ATP = UDP-N-acetyl-alpha-D-muramoyl-L-alanyl-D-glutamate + ADP + phosphate + H(+). It functions in the pathway cell wall biogenesis; peptidoglycan biosynthesis. Functionally, cell wall formation. Catalyzes the addition of glutamate to the nucleotide precursor UDP-N-acetylmuramoyl-L-alanine (UMA). This chain is UDP-N-acetylmuramoylalanine--D-glutamate ligase, found in Campylobacter jejuni subsp. jejuni serotype O:23/36 (strain 81-176).